We begin with the raw amino-acid sequence, 131 residues long: UPF0102 protein YraN (131 aa).

This sequence belongs to the UPF0102 family.

The chain is UPF0102 protein YraN from Salmonella agona (strain SL483).